The chain runs to 164 residues: Zinc finger protein ZAT8 (164 aa).

C2H2-type zinc fingers lie at residues 37-59 (FRCK…RASH) and 85-107 (HPCP…MRRH).

The protein resides in the nucleus. Probable transcription factor that may be involved in stress responses. This chain is Zinc finger protein ZAT8 (ZAT8), found in Arabidopsis thaliana (Mouse-ear cress).